Here is a 226-residue protein sequence, read N- to C-terminus: ATP-dependent Clp protease proteolytic subunit 2 (226 aa).

Ser118 serves as the catalytic Nucleophile. Residue His143 is part of the active site.

It belongs to the peptidase S14 family. As to quaternary structure, fourteen ClpP subunits assemble into 2 heptameric rings which stack back to back to give a disk-like structure with a central cavity, resembling the structure of eukaryotic proteasomes.

The protein localises to the cytoplasm. The catalysed reaction is Hydrolysis of proteins to small peptides in the presence of ATP and magnesium. alpha-casein is the usual test substrate. In the absence of ATP, only oligopeptides shorter than five residues are hydrolyzed (such as succinyl-Leu-Tyr-|-NHMec, and Leu-Tyr-Leu-|-Tyr-Trp, in which cleavage of the -Tyr-|-Leu- and -Tyr-|-Trp bonds also occurs).. In terms of biological role, cleaves peptides in various proteins in a process that requires ATP hydrolysis. Has a chymotrypsin-like activity. Plays a major role in the degradation of misfolded proteins. This chain is ATP-dependent Clp protease proteolytic subunit 2, found in Synechocystis sp. (strain ATCC 27184 / PCC 6803 / Kazusa).